We begin with the raw amino-acid sequence, 147 residues long: 3-hydroxyacyl-[acyl-carrier-protein] dehydratase FabZ (147 aa).

The active site involves His-49.

This sequence belongs to the thioester dehydratase family. FabZ subfamily.

It localises to the cytoplasm. The enzyme catalyses a (3R)-hydroxyacyl-[ACP] = a (2E)-enoyl-[ACP] + H2O. In terms of biological role, involved in unsaturated fatty acids biosynthesis. Catalyzes the dehydration of short chain beta-hydroxyacyl-ACPs and long chain saturated and unsaturated beta-hydroxyacyl-ACPs. This chain is 3-hydroxyacyl-[acyl-carrier-protein] dehydratase FabZ, found in Syntrophotalea carbinolica (strain DSM 2380 / NBRC 103641 / GraBd1) (Pelobacter carbinolicus).